Reading from the N-terminus, the 426-residue chain is tRNA(Met) cytidine acetate ligase (426 aa).

Residues 7–20 (VVEY…HLFH), Gly101, Asn168, and Arg193 each bind ATP.

The protein belongs to the TmcAL family.

It is found in the cytoplasm. It catalyses the reaction cytidine(34) in elongator tRNA(Met) + acetate + ATP = N(4)-acetylcytidine(34) in elongator tRNA(Met) + AMP + diphosphate. Its function is as follows. Catalyzes the formation of N(4)-acetylcytidine (ac(4)C) at the wobble position of elongator tRNA(Met), using acetate and ATP as substrates. First activates an acetate ion to form acetyladenylate (Ac-AMP) and then transfers the acetyl group to tRNA to form ac(4)C34. The sequence is that of tRNA(Met) cytidine acetate ligase from Kosmotoga olearia (strain ATCC BAA-1733 / DSM 21960 / TBF 19.5.1).